A 241-amino-acid polypeptide reads, in one-letter code: Endodeoxyribonuclease NucC (241 aa).

Catalysis depends on residues Asp73, Glu104, and Lys106. 2 residues coordinate Mg(2+): Asp73 and Glu104.

The protein belongs to the NucC endonuclease family. In terms of assembly, self-oligomerizes. Forms homotrimers; in the presence of cAAA the trimers associate face-to-face to form homohexamers. The 2 cAAA-binding sites are on the exterior of the hexamer at the three-way junction, there are maximally 2 cyclic nucleotides per hexamer. Mg(2+) is required as a cofactor.

With respect to regulation, activated by cAAA and to a lesser extent cAA; both cyclic nucleotides are products of its cognate CD-NTase. Cyclic nucleotide binding causes hexamerization. Its function is as follows. Effector DNase of a CBASS antivirus system. CBASS (cyclic oligonucleotide-based antiphage signaling system) provides immunity against bacteriophage. The CD-NTase protein synthesizes cyclic nucleotides in response to infection; these serve as specific second messenger signals. The signals activate a diverse range of effectors, leading to bacterial cell death and thus abortive phage infection. A type III-C(AAA) CBASS system. A cyclic nucleotide-activated dsDNase. In the presence of 3',3',3'-cyclic AMP-AMP-AMP (cAAA) and to a lesser extent cyclic-di-AMP (c-di-AMP), endonucleolytically degrades dsDNA. Binds one cAAA in a pocket on one surface of the trimer; cAAA binding promotes hexamerization which is probably necessary for nuclease activation. The nuclease digests dsDNA to about 50 bp lengths. DNA has been modeled to contact a pair of juxtaposed active sites (one from each layer of the hexamer), accounting for cleavage on both strands. The polypeptide is Endodeoxyribonuclease NucC (Pseudomonas aeruginosa).